The chain runs to 502 residues: Membrane-bound lytic murein transglycosylase F (502 aa).

A signal peptide spans 1–33 (MSRFISTFRSSSAQLSIVLAVILATGCSQPTTL). A non-LT domain region spans residues 34–264 (QEIREEGVLH…QLAERFYGHL (231 aa)). The tract at residues 265–502 (DRLNYVGART…PELRLIPPTL (238 aa)) is LT domain. Glu311 is a catalytic residue. The tract at residues 457 to 502 (PSASGLEDQLAWLGDNEAGPEAPAKESQPDLRADLPPELRLIPPTL) is disordered. Over residues 479 to 493 (PAKESQPDLRADLPP) the composition is skewed to basic and acidic residues.

It in the N-terminal section; belongs to the bacterial solute-binding protein 3 family. This sequence in the C-terminal section; belongs to the transglycosylase Slt family.

Its subcellular location is the cell outer membrane. It catalyses the reaction Exolytic cleavage of the (1-&gt;4)-beta-glycosidic linkage between N-acetylmuramic acid (MurNAc) and N-acetylglucosamine (GlcNAc) residues in peptidoglycan, from either the reducing or the non-reducing ends of the peptidoglycan chains, with concomitant formation of a 1,6-anhydrobond in the MurNAc residue.. In terms of biological role, murein-degrading enzyme that degrades murein glycan strands and insoluble, high-molecular weight murein sacculi, with the concomitant formation of a 1,6-anhydromuramoyl product. Lytic transglycosylases (LTs) play an integral role in the metabolism of the peptidoglycan (PG) sacculus. Their lytic action creates space within the PG sacculus to allow for its expansion as well as for the insertion of various structures such as secretion systems and flagella. The chain is Membrane-bound lytic murein transglycosylase F from Marinobacter nauticus (strain ATCC 700491 / DSM 11845 / VT8) (Marinobacter aquaeolei).